The chain runs to 590 residues: Aspartate--tRNA(Asp/Asn) ligase (590 aa).

Residue glutamate 170 participates in L-aspartate binding. The segment at 194-197 (QLFK) is aspartate. Arginine 216 contacts L-aspartate. ATP contacts are provided by residues 216 to 218 (RDE) and glutamine 225. Histidine 448 contacts L-aspartate. Glutamate 482 is an ATP binding site. Arginine 489 is an L-aspartate binding site. An ATP-binding site is contributed by 534 to 537 (GWDR). The segment at 559–590 (GGVDPLTEAPAPITAQQRKESGIDAKPGKDGA) is disordered. Residues 575 to 590 (QRKESGIDAKPGKDGA) are compositionally biased toward basic and acidic residues.

This sequence belongs to the class-II aminoacyl-tRNA synthetase family. Type 1 subfamily. In terms of assembly, homodimer.

Its subcellular location is the cytoplasm. It catalyses the reaction tRNA(Asx) + L-aspartate + ATP = L-aspartyl-tRNA(Asx) + AMP + diphosphate. Functionally, aspartyl-tRNA synthetase with relaxed tRNA specificity since it is able to aspartylate not only its cognate tRNA(Asp) but also tRNA(Asn). Reaction proceeds in two steps: L-aspartate is first activated by ATP to form Asp-AMP and then transferred to the acceptor end of tRNA(Asp/Asn). This Mycolicibacterium gilvum (strain PYR-GCK) (Mycobacterium gilvum (strain PYR-GCK)) protein is Aspartate--tRNA(Asp/Asn) ligase.